Consider the following 104-residue polypeptide: Large ribosomal subunit protein uL23 (104 aa).

This sequence belongs to the universal ribosomal protein uL23 family. As to quaternary structure, part of the 50S ribosomal subunit. Contacts protein L29, and trigger factor when it is bound to the ribosome.

Its function is as follows. One of the early assembly proteins it binds 23S rRNA. One of the proteins that surrounds the polypeptide exit tunnel on the outside of the ribosome. Forms the main docking site for trigger factor binding to the ribosome. The chain is Large ribosomal subunit protein uL23 from Polynucleobacter asymbioticus (strain DSM 18221 / CIP 109841 / QLW-P1DMWA-1) (Polynucleobacter necessarius subsp. asymbioticus).